The chain runs to 172 residues: Adenine phosphoribosyltransferase (172 aa).

Belongs to the purine/pyrimidine phosphoribosyltransferase family. Homodimer.

Its subcellular location is the cytoplasm. It catalyses the reaction AMP + diphosphate = 5-phospho-alpha-D-ribose 1-diphosphate + adenine. It functions in the pathway purine metabolism; AMP biosynthesis via salvage pathway; AMP from adenine: step 1/1. Functionally, catalyzes a salvage reaction resulting in the formation of AMP, that is energically less costly than de novo synthesis. The sequence is that of Adenine phosphoribosyltransferase from Clostridium botulinum (strain Loch Maree / Type A3).